Reading from the N-terminus, the 201-residue chain is 3-isopropylmalate dehydratase small subunit (201 aa).

It belongs to the LeuD family. LeuD type 1 subfamily. As to quaternary structure, heterodimer of LeuC and LeuD.

It carries out the reaction (2R,3S)-3-isopropylmalate = (2S)-2-isopropylmalate. Its pathway is amino-acid biosynthesis; L-leucine biosynthesis; L-leucine from 3-methyl-2-oxobutanoate: step 2/4. Functionally, catalyzes the isomerization between 2-isopropylmalate and 3-isopropylmalate, via the formation of 2-isopropylmaleate. This chain is 3-isopropylmalate dehydratase small subunit, found in Shewanella woodyi (strain ATCC 51908 / MS32).